A 134-amino-acid chain; its full sequence is Profilin-4 (134 aa).

Residues Cys13 and Cys118 are joined by a disulfide bond. The Involved in PIP2 interaction signature appears at 84 to 100; sequence AVIRGKKGSGGITIKKT. The residue at position 114 (Thr114) is a Phosphothreonine.

It belongs to the profilin family. Occurs in many kinds of cells as a complex with monomeric actin in a 1:1 ratio. Phosphorylated by MAP kinases.

The protein localises to the cytoplasm. It is found in the cytoskeleton. Binds to actin and affects the structure of the cytoskeleton. At high concentrations, profilin prevents the polymerization of actin, whereas it enhances it at low concentrations. The polypeptide is Profilin-4 (Olea europaea (Common olive)).